Here is a 211-residue protein sequence, read N- to C-terminus: Protein-L-isoaspartate O-methyltransferase (211 aa).

Serine 60 is a catalytic residue.

The protein belongs to the methyltransferase superfamily. L-isoaspartyl/D-aspartyl protein methyltransferase family.

The protein localises to the cytoplasm. The catalysed reaction is [protein]-L-isoaspartate + S-adenosyl-L-methionine = [protein]-L-isoaspartate alpha-methyl ester + S-adenosyl-L-homocysteine. Catalyzes the methyl esterification of L-isoaspartyl residues in peptides and proteins that result from spontaneous decomposition of normal L-aspartyl and L-asparaginyl residues. It plays a role in the repair and/or degradation of damaged proteins. In Pseudomonas paraeruginosa (strain DSM 24068 / PA7) (Pseudomonas aeruginosa (strain PA7)), this protein is Protein-L-isoaspartate O-methyltransferase.